The following is a 365-amino-acid chain: S-adenosylmethionine:tRNA ribosyltransferase-isomerase (365 aa).

Belongs to the QueA family. Monomer.

The protein resides in the cytoplasm. The catalysed reaction is 7-aminomethyl-7-carbaguanosine(34) in tRNA + S-adenosyl-L-methionine = epoxyqueuosine(34) in tRNA + adenine + L-methionine + 2 H(+). It functions in the pathway tRNA modification; tRNA-queuosine biosynthesis. Transfers and isomerizes the ribose moiety from AdoMet to the 7-aminomethyl group of 7-deazaguanine (preQ1-tRNA) to give epoxyqueuosine (oQ-tRNA). The sequence is that of S-adenosylmethionine:tRNA ribosyltransferase-isomerase from Rickettsia peacockii (strain Rustic).